The chain runs to 596 residues: Elongation factor 4 (596 aa).

Residues 2 to 184 enclose the tr-type G domain; that stretch reads KHIRNFSIIA…VIVEQIPPPE (183 aa). GTP is bound by residues 14-19 and 131-134; these read DHGKST and NKID.

Belongs to the TRAFAC class translation factor GTPase superfamily. Classic translation factor GTPase family. LepA subfamily.

Its subcellular location is the cell inner membrane. The enzyme catalyses GTP + H2O = GDP + phosphate + H(+). In terms of biological role, required for accurate and efficient protein synthesis under certain stress conditions. May act as a fidelity factor of the translation reaction, by catalyzing a one-codon backward translocation of tRNAs on improperly translocated ribosomes. Back-translocation proceeds from a post-translocation (POST) complex to a pre-translocation (PRE) complex, thus giving elongation factor G a second chance to translocate the tRNAs correctly. Binds to ribosomes in a GTP-dependent manner. This Shewanella sp. (strain MR-7) protein is Elongation factor 4.